Here is a 510-residue protein sequence, read N- to C-terminus: MASSSTSFPLTTAPPQGVRFNRRKPRLTVWAKQTAFQLGKTKGDDDSEGKQKGKNPFQFDFGKLPDMKSLIPVVTNPSTGLVFGNNRKKDPGTIFVAGATGQAGIRIAQTLLQRGFSVRAGVPDLGAAQDLARVAATYKILSNDEVKRLNAVQSPFQDAESIAKAIGNATKVVVTVGATENGPDAQVSTSDALLVVQAAELAGVSHVAIVYDGTISGSTYNVLDGITSFFGNLFAKSQPLTISDLIEKVAQTDVAYTLIKTSLTEDFSPEKAYNVVVSAEGSNSGSGSSSSEAYKVPKLKIASLVADIFANTAVAENKVVEVSTDPSAPSRPVDELFSVIPEDGRRKVYADAIARERAEEEAKVAADKAREAAEAAKEFEKQMQKLSEKEAEAASLAEDAQQKADAVGVTVDGLFNKAKDISSGLSWNKLGSQFATAIQNASETPKVQVATVRGQAKARNLPPKKAVVKQRPSSPFASKPKEERPKKPEKEVRKVFGGLFKQETIYIDDD.

Positions 1–14 (MASSSTSFPLTTAP) are enriched in polar residues. The N-terminal 19 residues, 1-19 (MASSSTSFPLTTAPPQGVR), are a transit peptide targeting the chloroplast. Disordered stretches follow at residues 1–24 (MASS…NRRK) and 38–58 (LGKT…NPFQ). Basic and acidic residues predominate over residues 41–51 (TKGDDDSEGKQ). Position 94–123 (94–123 (IFVAGATGQAGIRIAQTLLQRGFSVRAGVP)) interacts with NADP(+). Positions 354 to 403 (ARERAEEEAKVAADKAREAAEAAKEFEKQMQKLSEKEAEAASLAEDAQQK) form a coiled coil. At Ser-395 the chain carries Phosphoserine. Thr-451 carries the post-translational modification Phosphothreonine; by STN7. Positions 453 to 493 (RGQAKARNLPPKKAVVKQRPSSPFASKPKEERPKKPEKEVR) are disordered. The span at 479 to 493 (KPKEERPKKPEKEVR) shows a compositional bias: basic and acidic residues.

This sequence belongs to the NAD(P)-dependent epimerase/dehydratase family. Component of the plastid transcriptionally active chromosome required for plastid gene expression. Interacts with DEGP1 under high light conditions and maybe its degradation target. Excluded from chloroplast nucleoid when phosphorylated on Thr-451 by STN7 that may regulate membrane-anchoring functions of the nucleoid.

It localises to the plastid. The protein localises to the chloroplast stroma. It is found in the chloroplast nucleoid. Its subcellular location is the chloroplast thylakoid membrane. Probably involved in the regulation of plastid gene expression. This Arabidopsis thaliana (Mouse-ear cress) protein is Protein PLASTID TRANSCRIPTIONALLY ACTIVE 16, chloroplastic.